The following is a 65-amino-acid chain: Weak neurotoxin 6 (65 aa).

5 cysteine pairs are disulfide-bonded: C3/C24, C6/C11, C17/C42, C46/C57, and C58/C63.

Belongs to the three-finger toxin family. Ancestral subfamily. Orphan group II sub-subfamily. In terms of tissue distribution, expressed by the venom gland.

The protein localises to the secreted. In terms of biological role, binds with low affinity to muscular (alpha-1-beta-1-delta-epsilon/CHRNA1-CHRNB1-CHRND-CHRNE) and very low affinity to neuronal (alpha-7/CHRNA7) nicotinic acetylcholine receptor (nAChR). This chain is Weak neurotoxin 6, found in Naja naja (Indian cobra).